Consider the following 266-residue polypeptide: MNWAFLQGLLSGVNKYSTVLSRIWLSVVFIFRVLVYVVAAEEVWDDEQKDFVCNTKQPGCPNVCYDEFFPVSHVRLWALQLILVTCPSLLVVMHVAYREERERKHHLKHGPNAPSLYDNLSKKRGGLWWTYLLSLIFKAAVDAGFLYIFHRLYKDYDMPRVVACSVEPCPHTVDCYISRPTEKKVFTYFMVTTAAICILLNLSEVFYLVGKRCMEIFGPRHRRPRCRECLPDTCPPYVLSQGGHPEDGNSVLMKAGSAPVDAGGYP.

The stretch at 2–13 is an intramembrane region; sequence NWAFLQGLLSGV. At 14–20 the chain is on the cytoplasmic side; sequence NKYSTVL. The helical transmembrane segment at 21–40 threads the bilayer; sequence SRIWLSVVFIFRVLVYVVAA. Topologically, residues 41–73 are extracellular; that stretch reads EEVWDDEQKDFVCNTKQPGCPNVCYDEFFPVSH. 3 cysteine pairs are disulfide-bonded: C53-C175, C60-C169, and C64-C164. The helical transmembrane segment at 74 to 94 threads the bilayer; it reads VRLWALQLILVTCPSLLVVMH. The Cytoplasmic portion of the chain corresponds to 95–130; sequence VAYREERERKHHLKHGPNAPSLYDNLSKKRGGLWWT. A helical transmembrane segment spans residues 131–151; the sequence is YLLSLIFKAAVDAGFLYIFHR. The Extracellular segment spans residues 152 to 184; it reads LYKDYDMPRVVACSVEPCPHTVDCYISRPTEKK. The chain crosses the membrane as a helical span at residues 185–205; the sequence is VFTYFMVTTAAICILLNLSEV. The Cytoplasmic segment spans residues 206-266; sequence FYLVGKRCME…SAPVDAGGYP (61 aa).

The protein belongs to the connexin family. Beta-type (group I) subfamily. A hemichannel or connexon is composed of a hexamer of connexins. A functional gap junction is formed by the apposition of two hemichannels. Forms heteromeric channels with GJB2.

It is found in the cell membrane. It localises to the cell junction. The protein localises to the gap junction. In terms of biological role, structural component of gap junctions. Gap junctions are dodecameric channels that connect the cytoplasm of adjoining cells. They are formed by the docking of two hexameric hemichannels, one from each cell membrane. Small molecules and ions diffuse from one cell to a neighboring cell via the central pore. The protein is Gap junction beta-4 protein (GJB4) of Homo sapiens (Human).